Here is a 59-residue protein sequence, read N- to C-terminus: Large ribosomal subunit protein uL30 (59 aa).

This sequence belongs to the universal ribosomal protein uL30 family. Part of the 50S ribosomal subunit.

In Listeria innocua serovar 6a (strain ATCC BAA-680 / CLIP 11262), this protein is Large ribosomal subunit protein uL30.